The sequence spans 445 residues: KICSTOR subunit 2 (445 aa).

It belongs to the KICS2 family. As to quaternary structure, part of the KICSTOR complex composed of KPTN, ITFG2, KICS2 and SZT2. SZT2 probably serves as a link between the other three proteins in the KICSTOR complex and may mediate the direct interaction with the GATOR complex via GATOR1. The KICSTOR complex interacts directly with the GATOR1 complex and most probably indirectly with the GATOR2 complex in an amino acid-independent manner.

Its subcellular location is the lysosome membrane. As part of the KICSTOR complex functions in the amino acid-sensing branch of the TORC1 signaling pathway. Recruits, in an amino acid-independent manner, the GATOR1 complex to the lysosomal membranes and allows its interaction with GATOR2 and the RAG GTPases. Functions upstream of the RAG GTPases and is required to negatively regulate mTORC1 signaling in absence of amino acids. In absence of the KICSTOR complex mTORC1 is constitutively localized to the lysosome and activated. The KICSTOR complex is also probably involved in the regulation of mTORC1 by glucose. This Mus musculus (Mouse) protein is KICSTOR subunit 2.